The primary structure comprises 105 residues: Met repressor (105 aa).

It belongs to the MetJ family. As to quaternary structure, homodimer.

It localises to the cytoplasm. In terms of biological role, this regulatory protein, when combined with SAM (S-adenosylmethionine) represses the expression of the methionine regulon and of enzymes involved in SAM synthesis. The polypeptide is Met repressor (Yersinia enterocolitica serotype O:8 / biotype 1B (strain NCTC 13174 / 8081)).